A 327-amino-acid chain; its full sequence is Pyruvate dehydrogenase E1 component subunit beta (327 aa).

Thiamine diphosphate is bound at residue Glu-63.

Heterodimer of an alpha and a beta chain. Thiamine diphosphate is required as a cofactor.

The enzyme catalyses N(6)-[(R)-lipoyl]-L-lysyl-[protein] + pyruvate + H(+) = N(6)-[(R)-S(8)-acetyldihydrolipoyl]-L-lysyl-[protein] + CO2. The pyruvate dehydrogenase complex catalyzes the overall conversion of pyruvate to acetyl-CoA and CO(2). It contains multiple copies of three enzymatic components: pyruvate dehydrogenase (E1), dihydrolipoamide acetyltransferase (E2) and lipoamide dehydrogenase (E3). This chain is Pyruvate dehydrogenase E1 component subunit beta (pdhB), found in Mycoplasma pneumoniae (strain ATCC 29342 / M129 / Subtype 1) (Mycoplasmoides pneumoniae).